Reading from the N-terminus, the 85-residue chain is UPF0181 protein YE1782 (85 aa).

2 disordered regions span residues 1–22 and 57–85; these read MLAG…RIHQ and DTDF…PYEG. A compositionally biased stretch (basic and acidic residues) spans 9–21; that stretch reads SHEEQQEAVERIH. The segment covering 74–85 has biased composition (acidic residues); it reads QDADEIEDPYEG.

This sequence belongs to the UPF0181 family.

This chain is UPF0181 protein YE1782, found in Yersinia enterocolitica serotype O:8 / biotype 1B (strain NCTC 13174 / 8081).